We begin with the raw amino-acid sequence, 70 residues long: ATP synthase subunit c (70 aa).

The next 2 membrane-spanning stretches (helical) occupy residues 4 to 24 (IAAA…NGLI) and 49 to 69 (GIAL…LAFF).

It belongs to the ATPase C chain family. F-type ATPases have 2 components, F(1) - the catalytic core - and F(0) - the membrane proton channel. F(1) has five subunits: alpha(3), beta(3), gamma(1), delta(1), epsilon(1). F(0) has three main subunits: a(1), b(2) and c(10-14). The alpha and beta chains form an alternating ring which encloses part of the gamma chain. F(1) is attached to F(0) by a central stalk formed by the gamma and epsilon chains, while a peripheral stalk is formed by the delta and b chains. The F(1)F(0) complex interacts with SpoIIIJ and YqjG; YqgA is found in the same complex.

It localises to the cell membrane. In terms of biological role, f(1)F(0) ATP synthase produces ATP from ADP in the presence of a proton or sodium gradient. F-type ATPases consist of two structural domains, F(1) containing the extramembraneous catalytic core and F(0) containing the membrane proton channel, linked together by a central stalk and a peripheral stalk. During catalysis, ATP synthesis in the catalytic domain of F(1) is coupled via a rotary mechanism of the central stalk subunits to proton translocation. Functionally, key component of the F(0) channel; it plays a direct role in translocation across the membrane. A homomeric c-ring of between 10-14 subunits forms the central stalk rotor element with the F(1) delta and epsilon subunits. The chain is ATP synthase subunit c from Bacillus subtilis (strain 168).